A 67-amino-acid chain; its full sequence is Light-harvesting protein B-870 alpha chain (67 aa).

Met-1 is subject to N-formylmethionine; in strain DSM 149 and DSM 151. At 1 to 12 the chain is on the cytoplasmic side; it reads MWRIWRLFDPMR. A helical membrane pass occupies residues 13–33; the sequence is AMVAQAVFLLGLAVLIHLMLL. His-29 lines the a bacteriochlorophyll pocket. Residues 34 to 67 lie on the Periplasmic side of the membrane; the sequence is GTNKYNWLDGAKKAPAATAVAPVPAEVTSLAQAK.

The protein belongs to the antenna complex alpha subunit family. As to quaternary structure, an alpha/beta heterodimer. The core complex is formed by different alpha and beta chains, binding bacteriochlorophyll molecules, and arranged most probably in tetrameric structures disposed around the reaction center. The non-pigmented gamma chains may constitute additional components. In terms of processing, the N-terminus is blocked.

The protein resides in the cell inner membrane. Its function is as follows. Antenna complexes are light-harvesting systems, which transfer the excitation energy to the reaction centers. The protein is Light-harvesting protein B-870 alpha chain (pufA) of Rubrivivax gelatinosus (Rhodocyclus gelatinosus).